The chain runs to 30 residues: Mejucin (30 aa).

The protein localises to the secreted. In terms of biological role, bacteriocin that inhibits the growth of several Gram-positive bacteria, especially the food-borne pathogens L.monocytogenes, B.cereus strain ATCC 11778, B.cereus strain ATCC 21366, B.cereus strain ATCC 10876 and B.cereus strain ATCC 14579. Likely to act by disrupting the pathogen membrane resulting in leakage of intracellular constituents. Does not inhibit the growth of Gram-negative bacteria. This chain is Mejucin, found in Bacillus subtilis.